A 62-amino-acid polypeptide reads, in one-letter code: MSFLKKSLFLVLFLGLVSSSICEEEKRETEEEENEDEIEEESEEKKREDPERPPGFTPFRVY.

The first 19 residues, 1-19, serve as a signal peptide directing secretion; sequence MSFLKKSLFLVLFLGLVSS. A propeptide spanning residues 20–48 is cleaved from the precursor; it reads SICEEEKRETEEEENEDEIEEESEEKKRE. The disordered stretch occupies residues 22–62; sequence CEEEKRETEEEENEDEIEEESEEKKREDPERPPGFTPFRVY. The span at 30–42 shows a compositional bias: acidic residues; the sequence is EEEENEDEIEEES. A compositionally biased stretch (basic and acidic residues) spans 43–52; sequence EEKKREDPER. Tyr62 is subject to Sulfotyrosine; partial.

Belongs to the frog skin active peptide (FSAP) family. Bradykinin-related peptide subfamily. Asp,Pro,Glu-[Thr6,Val10]-phyllokinin and [Thr6,Val10]-phyllokinin occur in sulfated and nonsulfated forms. [Thr6]-bradykinin and Des-Arg-[Thr6]-bradykinin are nonsulfated. As to expression, expressed by the skin glands.

It is found in the secreted. Its function is as follows. Inhibits ACE with a Ki of 1.6 uM, and targets B2 bradykinin receptor (BDKRB2). Provokes contraction of smooth muscle preparation (ileum). In vivo, induces an early hyperalgesic effects in living rats after intraplantar injection. The polypeptide is Phyllokinin-1 (Pithecopus azureus (Orange-legged monkey tree frog)).